We begin with the raw amino-acid sequence, 632 residues long: Putative ferric transport system permease protein FbpB 1 (632 aa).

15 consecutive transmembrane segments (helical) span residues 5 to 25 (SFNL…LPLL), 37 to 57 (LFLT…YKIS), 58 to 78 (MGYS…LSLA), 93 to 113 (LLCI…AIFV), 144 to 164 (LFLS…FALY), 178 to 198 (IFSI…VTLM), 223 to 243 (GFNG…FMIL), 270 to 290 (YQII…IVFI), 299 to 319 (PLVL…YIAG), 330 to 350 (LGSM…IWIG), 377 to 397 (IIGM…SIFY), 436 to 456 (IYAG…AYIV), 469 to 489 (FLTM…YILA), 490 to 510 (FNNA…SMVM), and 547 to 567 (CFIV…TSFV). The 206-residue stretch at 140 to 345 (ITNSLFLSGF…IFSLAIFIIQ (206 aa)) folds into the ABC transmembrane type-1 1 domain. In terms of domain architecture, ABC transmembrane type-1 2 spans 431–632 (LINTLIYAGI…DCRRYAYFPF (202 aa)).

Belongs to the binding-protein-dependent transport system permease family. FbpB subfamily. The complex is composed of two ATP-binding proteins (FbpC), two transmembrane proteins (FbpB) and a solute-binding protein (FbpA).

The protein localises to the cell inner membrane. Its function is as follows. Part of the ABC transporter complex FbpABC (TC 3.A.1.10.1) involved in Fe(3+) ions import. Probably responsible for the translocation of the substrate across the membrane. The polypeptide is Putative ferric transport system permease protein FbpB 1 (fbpB1) (Haemophilus influenzae (strain ATCC 51907 / DSM 11121 / KW20 / Rd)).